The chain runs to 274 residues: ATP synthase subunit a (274 aa).

Helical transmembrane passes span 43 to 63, 103 to 123, 149 to 169, 223 to 243, and 245 to 265; these read TLNI…LLVF, VIAP…MMDL, DVSI…FYSI, LIFI…LSVP, and AIFH…LTIV.

Belongs to the ATPase A chain family. F-type ATPases have 2 components, CF(1) - the catalytic core - and CF(0) - the membrane proton channel. CF(1) has five subunits: alpha(3), beta(3), gamma(1), delta(1), epsilon(1). CF(0) has three main subunits: a(1), b(2) and c(9-12). The alpha and beta chains form an alternating ring which encloses part of the gamma chain. CF(1) is attached to CF(0) by a central stalk formed by the gamma and epsilon chains, while a peripheral stalk is formed by the delta and b chains.

It localises to the cell inner membrane. Functionally, key component of the proton channel; it plays a direct role in the translocation of protons across the membrane. The sequence is that of ATP synthase subunit a from Yersinia pestis bv. Antiqua (strain Angola).